A 223-amino-acid chain; its full sequence is Deoxyribose-phosphate aldolase (223 aa).

The active-site Proton donor/acceptor is D92. K154 functions as the Schiff-base intermediate with acetaldehyde in the catalytic mechanism. Residue K182 is the Proton donor/acceptor of the active site.

The protein belongs to the DeoC/FbaB aldolase family. DeoC type 1 subfamily.

Its subcellular location is the cytoplasm. The catalysed reaction is 2-deoxy-D-ribose 5-phosphate = D-glyceraldehyde 3-phosphate + acetaldehyde. Its pathway is carbohydrate degradation; 2-deoxy-D-ribose 1-phosphate degradation; D-glyceraldehyde 3-phosphate and acetaldehyde from 2-deoxy-alpha-D-ribose 1-phosphate: step 2/2. Catalyzes a reversible aldol reaction between acetaldehyde and D-glyceraldehyde 3-phosphate to generate 2-deoxy-D-ribose 5-phosphate. The protein is Deoxyribose-phosphate aldolase of Haemophilus influenzae (strain 86-028NP).